We begin with the raw amino-acid sequence, 402 residues long: Tyrosine--tRNA ligase (402 aa).

The 'HIGH' region motif lies at 48–57; that stretch reads PTGSDIHLGH. The short motif at 235-239 is the 'KMSKS' region element; that stretch reads KMSKS. Residue lysine 238 participates in ATP binding. Positions 338-402 constitute an S4 RNA-binding domain; that stretch reads AKAFYLVSAV…GKKKFVRLVL (65 aa).

The protein belongs to the class-I aminoacyl-tRNA synthetase family. TyrS type 2 subfamily. Homodimer.

It localises to the cytoplasm. It catalyses the reaction tRNA(Tyr) + L-tyrosine + ATP = L-tyrosyl-tRNA(Tyr) + AMP + diphosphate + H(+). In terms of biological role, catalyzes the attachment of tyrosine to tRNA(Tyr) in a two-step reaction: tyrosine is first activated by ATP to form Tyr-AMP and then transferred to the acceptor end of tRNA(Tyr). This chain is Tyrosine--tRNA ligase, found in Synechococcus elongatus (strain ATCC 33912 / PCC 7942 / FACHB-805) (Anacystis nidulans R2).